A 326-amino-acid chain; its full sequence is DNA-directed RNA polymerase subunit alpha (326 aa).

The alpha N-terminal domain (alpha-NTD) stretch occupies residues 1-232 (MQGSARDFLK…EQLSSFVELE (232 aa)). Residues 246–326 (FDPQLLAAVD…NWPPVDLMSE (81 aa)) form an alpha C-terminal domain (alpha-CTD) region.

The protein belongs to the RNA polymerase alpha chain family. As to quaternary structure, homodimer. The RNAP catalytic core consists of 2 alpha, 1 beta, 1 beta' and 1 omega subunit. When a sigma factor is associated with the core the holoenzyme is formed, which can initiate transcription.

The enzyme catalyses RNA(n) + a ribonucleoside 5'-triphosphate = RNA(n+1) + diphosphate. In terms of biological role, DNA-dependent RNA polymerase catalyzes the transcription of DNA into RNA using the four ribonucleoside triphosphates as substrates. This is DNA-directed RNA polymerase subunit alpha from Vesicomyosocius okutanii subsp. Calyptogena okutanii (strain HA).